A 509-amino-acid polypeptide reads, in one-letter code: MDRSSAVGGCGGGGGLGVGVVTSSATALGPGGLTNGGGGVVSGALNGLEAMSAESTGLCLQDLVSAGTANGAGSAGSAESATTTSTALSSGSTGSSTVNGGGSSTSGTEHLHSHHSLHDSSSSVSISPAISSLMPISSLSHLHHSAGQDLVGGYSQHPHHTVVPPHTPKHEPLEKLRIWAETGDFRDSHSSMTAVANSLDSTHLNNFQTSSTSSISNRSRDRKDGNRSVNETTIKTENISSSGHDEPMTTSGEEPKNDKKNKRQRRQRTHFTSQQLQELEHTFSRNRYPDMSTREEIAMWTNLTEARVRVWFKNRRAKWRKRERNAMNAAVAAADFKSGFGTQFMQPFADDSLYSSYPYNNWTKVPSPLGTKPFPWPVNPLGSMVAGNHHQNSVNCFNTGASGVAVSMNNASMLPGSMGSSLSNTSNVGAVGAPCPYTTPANPYMYRSAAEPCMSSSMSSSIATLRLKAKQHASAGFGSPYSAPSPVSRSNSAGLSACQYTGVGVTDVV.

A compositionally biased stretch (low complexity) spans 70 to 98; it reads NGAGSAGSAESATTTSTALSSGSTGSSTV. 3 disordered regions span residues 70–125, 148–171, and 204–273; these read NGAG…SSVS, QDLV…PKHE, and LNNF…HFTS. Positions 227–242 are enriched in polar residues; that stretch reads RSVNETTIKTENISSS. Basic and acidic residues predominate over residues 243 to 258; the sequence is GHDEPMTTSGEEPKND. Over residues 259-269 the composition is skewed to basic residues; that stretch reads KKNKRQRRQRT. The segment at residues 262 to 322 is a DNA-binding region (homeobox); sequence KRQRRQRTHF…KNRRAKWRKR (61 aa). An OAR motif is present at residues 460–473; the sequence is SSIATLRLKAKQHA. The Nuclear localization signal motif lies at 464–470; the sequence is TLRLKAK.

Belongs to the paired homeobox family. Bicoid subfamily.

It is found in the nucleus. Its function is as follows. Appears to control physiological cell functions rather than pattern formation during embryogenesis. This is Pituitary homeobox homolog Ptx1 (Ptx1) from Drosophila melanogaster (Fruit fly).